A 319-amino-acid polypeptide reads, in one-letter code: Epoxyqueuosine reductase (319 aa).

Asp-128 serves as the catalytic Proton donor. One can recognise a 4Fe-4S ferredoxin-type domain in the interval 173 to 202; the sequence is EANDPHPNYCGTCTRCLSACPTAALVEPAV. [4Fe-4S] cluster contacts are provided by Cys-182, Cys-185, Cys-188, Cys-192, Cys-208, Cys-236, Cys-239, and Cys-243.

The protein belongs to the QueG family. In terms of assembly, monomer. The cofactor is cob(II)alamin. Requires [4Fe-4S] cluster as cofactor.

It localises to the cytoplasm. It catalyses the reaction epoxyqueuosine(34) in tRNA + AH2 = queuosine(34) in tRNA + A + H2O. Its pathway is tRNA modification; tRNA-queuosine biosynthesis. Its function is as follows. Catalyzes the conversion of epoxyqueuosine (oQ) to queuosine (Q), which is a hypermodified base found in the wobble positions of tRNA(Asp), tRNA(Asn), tRNA(His) and tRNA(Tyr). In Gloeobacter violaceus (strain ATCC 29082 / PCC 7421), this protein is Epoxyqueuosine reductase.